The chain runs to 172 residues: Achaete-scute homolog 4 (172 aa).

Residues 72–124 (AFLRKRNERERQRVRCVNEGYARLRDHLPRELADKRLSKVETLRAAIDYIKHL) form the bHLH domain. Positions 144 to 172 (QRRAECNSDGESKASSAPSPSSEPEEGGS) are disordered. Positions 145-155 (RRAECNSDGES) are enriched in basic and acidic residues. The span at 156-165 (KASSAPSPSS) shows a compositional bias: low complexity.

Expressed in skin. 7-fold higher expression in fetal skin than in adult skin. Weak expression also detected in fetal lung, aorta and brain, and in adult stomach, kidney, ovary and breast.

It localises to the nucleus. Functionally, could be a transcriptional regulator involved in skin development. In Homo sapiens (Human), this protein is Achaete-scute homolog 4 (ASCL4).